Reading from the N-terminus, the 1857-residue chain is Ankyrin repeat domain-containing protein 31 (1857 aa).

2 disordered regions span residues 1 to 30 and 195 to 215; these read MENGAEASDCDSDETVIEGSVTENEPEDEE and SEPGEEVTQTMTSKETKDEES. Positions 195-207 are enriched in polar residues; it reads SEPGEEVTQTMTS. ANK repeat units follow at residues 475 to 504, 508 to 537, and 541 to 570; these read FGENLLYKAALHNDVDLVRCCIKNGENVNQ, DGWTALHEASIGGYYQAVSELLKGGADVNV, and YQITPLHDAVMNRHYKVAELLLMSGADPLF. Over residues 676-691 the composition is skewed to polar residues; the sequence is KFGKSNLNSVKNSRTN. Disordered regions lie at residues 676–711, 813–844, 995–1038, 1046–1065, and 1075–1137; these read KFGKSNLNSVKNSRTNVSKRKGQKNRQQKKTQVDDR, VTTHQQPHTNQEQYSSPYKSLGNNSSNEKGKA, RDSS…TVVH, KAEKRREDLPGNEPINNTDF, and ANSS…QNFR. A compositionally biased stretch (basic residues) spans 692–704; sequence VSKRKGQKNRQQK. Polar residues predominate over residues 814–839; it reads TTHQQPHTNQEQYSSPYKSLGNNSSN. Basic and acidic residues predominate over residues 1008-1019; that stretch reads SLERKQDTDKNY. A compositionally biased stretch (polar residues) spans 1023-1032; the sequence is GPNTSSSSRP. A compositionally biased stretch (basic and acidic residues) spans 1082 to 1136; the sequence is QRKEKENVRKSDAELTHNDSEAERTLKSCEEKKKNMDSETHSPCDIQEHRKDQNF. ANK repeat units lie at residues 1162-1191, 1195-1224, and 1228-1257; these read KGESQLHVAARGGNLSRVKVLIEARADVNL, AGWTPLHKAASGGFDDVIIELLQAGANVNC, and DGIVPLHGASAGNHLKAAEILLEHGANPNQ. Disordered stretches follow at residues 1457–1479, 1540–1570, 1609–1640, and 1663–1697; these read NSDISSDKKSQEPPTMGDSAHAQ, GGLLRSKPTDDAEKIASSSQPAALTPHAENS, DPHSQKLSRCNPKRRNKKTASQQPSAGAAEPL, and AAAASHTDSTQSSLSSASAHQHPTKTVPHRNTTPR. The segment covering 1555-1570 has biased composition (polar residues); it reads ASSSQPAALTPHAENS. Residues 1663–1683 are compositionally biased toward low complexity; that stretch reads AAAASHTDSTQSSLSSASAHQ. The 96-residue stretch at 1687 to 1782 folds into the RAMA domain; it reads KTVPHRNTTP…TYLGRELVKC (96 aa).

Interacts with REC114; the interaction is direct. Interacts with IHO1. As to expression, present in meiotic cells (at protein level).

The protein localises to the nucleus. The protein resides in the chromosome. Its function is as follows. Required for DNA double-strand breaks (DSBs) formation during meiotic recombination. Regulates the spatial and temporal patterns of pre-DSB recombinosome assembly and recombination activity by acting as a scaffold that anchors REC114 and other factors to specific genomic locations, thereby regulating DSB formation. Plays a key role in recombination in the pseudoautosomal regions of sex chromosomes. This chain is Ankyrin repeat domain-containing protein 31, found in Mus musculus (Mouse).